Consider the following 201-residue polypeptide: Nascent polypeptide-associated complex subunit alpha (201 aa).

Basic and acidic residues predominate over residues 1 to 20 (MANPRVEELPDEEVKKTVVD). Disordered regions lie at residues 1-51 (MANP…SRNE) and 118-165 (AQQL…IEDK). Acidic residues predominate over residues 21 to 36 (DHDDDSSSDSDGEEET). The region spanning 48 to 113 (SRNEKKARKA…AKIEDLNASA (66 aa)) is the NAC-A/B domain. Over residues 126–149 (GHDHDHAGHSHGEAKASEGDAKKE) the composition is skewed to basic and acidic residues. Acidic residues predominate over residues 150-161 (EEDDDEEVDADG). A UBA domain is found at 162 to 200 (IEDKDIELVMTQAGVSRTKAIKALKENDNDIVNSIMALS).

It belongs to the NAC-alpha family. In terms of assembly, part of the nascent polypeptide-associated complex (NAC), consisting of EGD2 and EGD1. NAC associates with ribosomes via EGD1.

The protein resides in the cytoplasm. The protein localises to the nucleus. Functionally, component of the nascent polypeptide-associated complex (NAC), a dynamic component of the ribosomal exit tunnel, protecting the emerging polypeptides from interaction with other cytoplasmic proteins to ensure appropriate nascent protein targeting. The NAC complex also promotes mitochondrial protein import by enhancing productive ribosome interactions with the outer mitochondrial membrane and blocks the inappropriate interaction of ribosomes translating non-secretory nascent polypeptides with translocation sites in the membrane of the endoplasmic reticulum. EGD2 may also be involved in transcription regulation. In Pyricularia oryzae (strain 70-15 / ATCC MYA-4617 / FGSC 8958) (Rice blast fungus), this protein is Nascent polypeptide-associated complex subunit alpha (EGD2).